A 699-amino-acid chain; its full sequence is (E2-independent) E3 ubiquitin-conjugating enzyme FATS (699 aa).

The required for interaction with p53/TP53 stretch occupies residues 48-116 (MISSIVISQM…LGIPAPSDER (69 aa)). Disordered stretches follow at residues 107 to 134 (LGIP…GGPR), 443 to 473 (KPTR…ERRH), and 528 to 569 (KSED…PARS). 2 stretches are compositionally biased toward basic and acidic residues: residues 113-129 (SDER…EERP) and 460-473 (CLSR…ERRH). A required for interaction with HDAC1 region spans residues 116–224 (RGPEAELPPK…GLCERRKYWV (109 aa)). Positions 534–545 (TPEPSPAAPSPA) are enriched in pro residues. An ALMS motif region spans residues 571-699 (TLQEALEVRK…LDQLLQRNAV (129 aa)).

In terms of assembly, interacts with HDAC1; the interaction prevents binding of HDAC1 to CDKN1A/p21 and facilitates the acetylation and stabilization of CDKN1A/p21. Interacts with p53/TP53; the interaction inhibits binding of p53/TP53 and MDM2.

It is found in the cytoplasm. The protein localises to the cytoskeleton. The protein resides in the microtubule organizing center. Its subcellular location is the centrosome. Functionally, tumor suppressor that is required to sustain G2/M checkpoint after DNA damage. Acts as a p53/TP53 activator by inhibiting MDM2 binding to p53/TP53 and stimulating non-proteolytic polyubiquitination of p53/TP53. Exhibits ubiquitin ligase (E3) activity and assemble ubiquitin polymers through 'Lys-11'- (K11-), 'Lys-29'- (K29-) and 'Lys-63'- (K63)-linkages, independently of the ubiquitin-conjugating enzyme (E2). Promotes p53/TP53-dependent transcription of CDKN1A/p21, leading to robust checkpoint response. Mediates CDKN1A/p21 protein stability in a ubiquitin-independent manner. Interacts with HDAC1 and prevents binding of HDAC1 to CDKN1A/p21 and facilitates the acetylation and stabilization of CDKN1A/p21. May have a role in the assembly of primary cilia. The polypeptide is (E2-independent) E3 ubiquitin-conjugating enzyme FATS (Homo sapiens (Human)).